Reading from the N-terminus, the 840-residue chain is Lethal(3)malignant brain tumor-like protein 1 (840 aa).

Ser117 is subject to Phosphoserine. Residues 127 to 269 (EYEDGGAPAG…WSSSQPATGE (143 aa)) form a disordered region. Positions 156–165 (PNQDPPEDDS) are enriched in acidic residues. Positions 200 to 210 (VENSSGSTSAS) are enriched in polar residues. Residues 236-247 (AMEKQEEGKDPE) show a composition bias toward basic and acidic residues. Over residues 250–266 (PTASTPESEEWSSSQPA) the composition is skewed to polar residues. 3 MBT repeats span residues 274–374 (WSWE…LQPP), 382–481 (FSWS…LTPP), and 490–585 (FCWE…LQPP). Positions 447-454 (FDNWDDTY) are interaction with monomethylated and dimethylated peptides. The disordered stretch occupies residues 580–605 (HPLQPPLGPREPSSASPGGCPPLSYR). The segment at 613-656 (SKYSFHHRKCPTPGCDGSGHVTGKFTAHHCLSGCPLAERNQSRL) adopts a CCHHC-type zinc-finger fold. Cys622, Cys627, His640, and Cys646 together coordinate Zn(2+). The interval 657-697 (KAELSDSEASARKKNLSGFSPRKKPRHHGRIGRPPKYRKIP) is disordered. Over residues 677–695 (PRKKPRHHGRIGRPPKYRK) the composition is skewed to basic residues.

In terms of assembly, homodimer. Interacts with RB1/RB (when monomethylated at 'Lys-860'). Interacts with p53/TP53 (when monomethylated at 'Lys-382'). Interacts with CBX3, ETV6, KMT5A and VCP/p97. Post-translationally, ubiquitinated in a VCP/p97-dependent way following DNA damage, leading to its removal from DNA damage sites, promoting accessibility of H4K20me2 mark for DNA repair protein TP53BP1, which is then recruited to DNA damage sites. Widely expressed. Expression is reduced in colorectal cancer cell line SW480 and promyelocytic leukemia cell line HL-60.

The protein localises to the nucleus. Its function is as follows. Polycomb group (PcG) protein that specifically recognizes and binds mono- and dimethyllysine residues on target proteins, thereby acting as a 'reader' of a network of post-translational modifications. PcG proteins maintain the transcriptionally repressive state of genes: acts as a chromatin compaction factor by recognizing and binding mono- and dimethylated histone H1b/H1-4 at 'Lys-26' (H1bK26me1 and H1bK26me2) and histone H4 at 'Lys-20' (H4K20me1 and H4K20me2), leading to condense chromatin and repress transcription. Recognizes and binds p53/TP53 monomethylated at 'Lys-382', leading to repress p53/TP53-target genes. Also recognizes and binds RB1/RB monomethylated at 'Lys-860'. Participates in the ETV6-mediated repression. Probably plays a role in cell proliferation. Overexpression induces multinucleated cells, suggesting that it is required to accomplish normal mitosis. The protein is Lethal(3)malignant brain tumor-like protein 1 (L3MBTL1) of Homo sapiens (Human).